The primary structure comprises 410 residues: NADH-quinone oxidoreductase subunit D (410 aa).

This sequence belongs to the complex I 49 kDa subunit family. In terms of assembly, NDH-1 is composed of 14 different subunits. Subunits NuoB, C, D, E, F, and G constitute the peripheral sector of the complex.

The protein resides in the cell inner membrane. The catalysed reaction is a quinone + NADH + 5 H(+)(in) = a quinol + NAD(+) + 4 H(+)(out). In terms of biological role, NDH-1 shuttles electrons from NADH, via FMN and iron-sulfur (Fe-S) centers, to quinones in the respiratory chain. The immediate electron acceptor for the enzyme in this species is believed to be ubiquinone. Couples the redox reaction to proton translocation (for every two electrons transferred, four hydrogen ions are translocated across the cytoplasmic membrane), and thus conserves the redox energy in a proton gradient. In Nitratiruptor sp. (strain SB155-2), this protein is NADH-quinone oxidoreductase subunit D.